Here is a 459-residue protein sequence, read N- to C-terminus: NADH oxidase (459 aa).

Position 10 (N10) interacts with FAD. H11 functions as the Proton acceptor in the catalytic mechanism. Residues A12, D34, Q35, C44, V81, A110, S113, K143, and Y172 each contribute to the FAD site. C44 serves as the catalytic Redox-active. Cysteine sulfinic acid (-SO2H) is present on C44. Residues I173, D192, Y201, and G256 each contribute to the NAD(+) site. D294 provides a ligand contact to FAD. A310 serves as a coordination point for NAD(+). The FAD site is built by L311, A312, and S313. G341 lines the NAD(+) pocket. Residue F439 participates in FAD binding.

Belongs to the class-III pyridine nucleotide-disulfide oxidoreductase family. It depends on FAD as a cofactor.

The protein localises to the secreted. It is found in the cell wall. It catalyses the reaction 2 NADH + O2 + 2 H(+) = 2 NAD(+) + 2 H2O. Catalyzes the four-electron reduction of molecular oxygen to water. Plays a role in redox balance maintenance. May be involved in mediating bacterial adhesion to host cells. May be considered a potential virulence factor. In Streptococcus pneumoniae serotype 4 (strain ATCC BAA-334 / TIGR4), this protein is NADH oxidase.